The primary structure comprises 1058 residues: Leucine-rich repeat and coiled-coil domain-containing protein PF3D7_0703800 (1058 aa).

A compositionally biased stretch (basic residues) spans 1–10; the sequence is MAIKKKKKET. Residues 1–34 are disordered; it reads MAIKKKKKETKSKDNNNDNLRNEKKSTNLENGKY. The span at 11–34 shows a compositional bias: basic and acidic residues; it reads KSKDNNNDNLRNEKKSTNLENGKY. A coiled-coil region spans residues 515–544; it reads LKQLYTFIKNYENNNDKLNIKSQIINKDKN. Positions 641-661 are enriched in basic and acidic residues; it reads ENKDHLQHEEHTHEEEPKDAN. Disordered regions lie at residues 641 to 665 and 706 to 728; these read ENKD…GDMV and NIED…ENMK. Positions 872–905 form a coiled coil; sequence NYDHTQENILKNKNNMEDQNNLLEQNIMTDQLQN.

This is Leucine-rich repeat and coiled-coil domain-containing protein PF3D7_0703800 from Plasmodium falciparum (isolate 3D7).